The following is a 278-amino-acid chain: Pantothenate synthetase (278 aa).

An ATP-binding site is contributed by 27-34 (MGYLHEGH). His34 serves as the catalytic Proton donor. A (R)-pantoate-binding site is contributed by Gln58. A beta-alanine-binding site is contributed by Gln58. 144 to 147 (GQKD) is a binding site for ATP. Gln150 is a (R)-pantoate binding site. ATP-binding positions include Val173 and 181-184 (MSSR).

This sequence belongs to the pantothenate synthetase family. In terms of assembly, homodimer.

It is found in the cytoplasm. It carries out the reaction (R)-pantoate + beta-alanine + ATP = (R)-pantothenate + AMP + diphosphate + H(+). It functions in the pathway cofactor biosynthesis; (R)-pantothenate biosynthesis; (R)-pantothenate from (R)-pantoate and beta-alanine: step 1/1. Catalyzes the condensation of pantoate with beta-alanine in an ATP-dependent reaction via a pantoyl-adenylate intermediate. In Roseiflexus sp. (strain RS-1), this protein is Pantothenate synthetase.